A 72-amino-acid polypeptide reads, in one-letter code: Translation initiation factor IF-1 (72 aa).

In terms of domain architecture, S1-like spans 1-72 (MTKEEAIEVD…SRGRIMFRER (72 aa)).

Belongs to the IF-1 family. As to quaternary structure, component of the 30S ribosomal translation pre-initiation complex which assembles on the 30S ribosome in the order IF-2 and IF-3, IF-1 and N-formylmethionyl-tRNA(fMet); mRNA recruitment can occur at any time during PIC assembly.

The protein localises to the cytoplasm. One of the essential components for the initiation of protein synthesis. Stabilizes the binding of IF-2 and IF-3 on the 30S subunit to which N-formylmethionyl-tRNA(fMet) subsequently binds. Helps modulate mRNA selection, yielding the 30S pre-initiation complex (PIC). Upon addition of the 50S ribosomal subunit IF-1, IF-2 and IF-3 are released leaving the mature 70S translation initiation complex. The sequence is that of Translation initiation factor IF-1 from Treponema pallidum (strain Nichols).